Here is a 757-residue protein sequence, read N- to C-terminus: MLLVPRVPVVMQGKCGLLKISRPLQGSLSRGFHFSRAHRSEYDEEKVVIDEINKKLTPVDIQNQQKLRNIGISAHIDSGKTTFTERVLYYTKRIKEIHEVRGRDNVGATMDFMDLEREKGITIQSAATYCSWDKDKNSYHFNLIDTPGHIDFTIEVERALRVLDGAVLVVCAVSGVQSQTVTVDRQMRRYNVPRVTFINKMDRMGANPFKAIEQLNSKLKLPAAAVQVPIGAESELKGVVDLLDMKAYYNKGDNGEIIESGPIPEELKSLAEEKRQVLIETLADVDEHMAEIFLEEKEPTIQEMKDAIRRATIARKFTPVLMGSALANTGVQHVLDAIVDYLPNPSEVLNTGLDIAHEEAKVNLIPSVQQPFVGLAFKLEEGKYGQLTYIRVYQGRLKKGSYITNVKTGKKVKVSRLVRMHSNEMEDVDEVGSGEICATFGIDCSSGDTFSDGTLQYSMSSMFVPDAVVSLSITPKSKDSTNFSKALNRFQKEDPTFRVRFDPESKETVISGMGELHLEIYVERMKREYNVECITGKPQVSYRESITIPSEFDYTHKKQSGGAGQYARIIGDLSPVEGGNKSNVFETHVVGGRIPDKYLSACAKGFDEACERGPLIGHKVLNVKMLINDGAIHSVDSNELAFKVATLTAFRDAFLKAQPVIMEPIMIVSVTSPNEFQGNVIGLLNKLQAVIQETDNGHDEFTLRAECSLSTMFGFASSLRASTQGKGEFSLEFSHYAPTAPHVQKELIAEFQKKQKK.

The transit peptide at 1 to 39 (MLLVPRVPVVMQGKCGLLKISRPLQGSLSRGFHFSRAHR) directs the protein to the mitochondrion. A tr-type G domain is found at 65-346 (QKLRNIGISA…AIVDYLPNPS (282 aa)). Residues 74–81 (AHIDSGKT), 145–149 (DTPGH), and 199–202 (NKMD) contribute to the GTP site.

The protein belongs to the TRAFAC class translation factor GTPase superfamily. Classic translation factor GTPase family. EF-G/EF-2 subfamily.

The protein resides in the mitochondrion. It functions in the pathway protein biosynthesis; polypeptide chain elongation. Functionally, mitochondrial GTPase that catalyzes the GTP-dependent ribosomal translocation step during translation elongation. During this step, the ribosome changes from the pre-translocational (PRE) to the post-translocational (POST) state as the newly formed A-site-bound peptidyl-tRNA and P-site-bound deacylated tRNA move to the P and E sites, respectively. Catalyzes the coordinated movement of the two tRNA molecules, the mRNA and conformational changes in the ribosome. The polypeptide is Elongation factor G, mitochondrial (Candida glabrata (strain ATCC 2001 / BCRC 20586 / JCM 3761 / NBRC 0622 / NRRL Y-65 / CBS 138) (Yeast)).